We begin with the raw amino-acid sequence, 485 residues long: ATP synthase subunit beta (485 aa).

Residues 1-20 are disordered; the sequence is MSTTKTTKMTVKTGSKGTSG. Residue 170–177 participates in ATP binding; sequence GGAGVGKT.

It belongs to the ATPase alpha/beta chains family. In terms of assembly, F-type ATPases have 2 components, CF(1) - the catalytic core - and CF(0) - the membrane proton channel. CF(1) has five subunits: alpha(3), beta(3), gamma(1), delta(1), epsilon(1). CF(0) has three main subunits: a(1), b(2) and c(9-12). The alpha and beta chains form an alternating ring which encloses part of the gamma chain. CF(1) is attached to CF(0) by a central stalk formed by the gamma and epsilon chains, while a peripheral stalk is formed by the delta and b chains.

The protein resides in the cell membrane. It catalyses the reaction ATP + H2O + 4 H(+)(in) = ADP + phosphate + 5 H(+)(out). Functionally, produces ATP from ADP in the presence of a proton gradient across the membrane. The catalytic sites are hosted primarily by the beta subunits. This chain is ATP synthase subunit beta, found in Mycobacterium leprae (strain TN).